The chain runs to 258 residues: Phosphoribosylaminoimidazole-succinocarboxamide synthase (258 aa).

Belongs to the SAICAR synthetase family.

It catalyses the reaction 5-amino-1-(5-phospho-D-ribosyl)imidazole-4-carboxylate + L-aspartate + ATP = (2S)-2-[5-amino-1-(5-phospho-beta-D-ribosyl)imidazole-4-carboxamido]succinate + ADP + phosphate + 2 H(+). It participates in purine metabolism; IMP biosynthesis via de novo pathway; 5-amino-1-(5-phospho-D-ribosyl)imidazole-4-carboxamide from 5-amino-1-(5-phospho-D-ribosyl)imidazole-4-carboxylate: step 1/2. The chain is Phosphoribosylaminoimidazole-succinocarboxamide synthase from Sphingopyxis alaskensis (strain DSM 13593 / LMG 18877 / RB2256) (Sphingomonas alaskensis).